The chain runs to 354 residues: uncharacterized protein (354 aa).

Positions 48–285 (VETWEISKIY…DEGYEVVLKG (238 aa)) constitute an ABC transporter domain. ATP is bound at residue 87–94 (GPNGAGKT).

The protein belongs to the ABC transporter superfamily.

This is an uncharacterized protein from Synechocystis sp. (strain ATCC 27184 / PCC 6803 / Kazusa).